A 135-amino-acid chain; its full sequence is Hexon-associated protein (135 aa).

A propeptide spanning residues 1 to 19 is cleaved from the precursor; the sequence is RDAQAEVQMTNAGVQLAGG.

This sequence belongs to the adenoviridae pVIII family.

This chain is Hexon-associated protein (PVIII), found in Homo sapiens (Human).